Consider the following 406-residue polypeptide: LIM/homeobox protein Lhx1 (406 aa).

LIM zinc-binding domains follow at residues 4-54 (CAGC…CKND) and 63-117 (CAGC…CKED). Disordered stretches follow at residues 128 to 189 (NSLH…TIKA) and 294 to 372 (DFFP…SAEV). A compositionally biased stretch (low complexity) spans 137 to 148 (SDPSLSPDSQDP). Over residues 151–167 (DDAKDSESANVSDKEGG) the composition is skewed to basic and acidic residues. Ser-162 is modified (phosphoserine). Residues 180–239 (RRGPRTTIKAKQLETLKAAFAATPKPTRHIREQLAQETGLNMRVIQVWFQNRRSKERRMK) constitute a DNA-binding region (homeobox). Residues 315–327 (PSSGPSGTPLGGL) show a composition bias toward low complexity. A compositionally biased stretch (pro residues) spans 352–362 (GDSPSPEPSLP).

As to quaternary structure, interacts with LDB1 via the tandem LIM domains.

The protein resides in the nucleus. In terms of biological role, potential transcription factor. May play a role in early mesoderm formation and later in lateral mesoderm differentiation and neurogenesis. The sequence is that of LIM/homeobox protein Lhx1 (Lhx1) from Mesocricetus auratus (Golden hamster).